A 445-amino-acid polypeptide reads, in one-letter code: Phosphoglucosamine mutase (445 aa).

Ser-102 functions as the Phosphoserine intermediate in the catalytic mechanism. Mg(2+) contacts are provided by Ser-102, Asp-241, Asp-243, and Asp-245. Ser-102 is subject to Phosphoserine.

It belongs to the phosphohexose mutase family. Mg(2+) serves as cofactor. Post-translationally, activated by phosphorylation.

It catalyses the reaction alpha-D-glucosamine 1-phosphate = D-glucosamine 6-phosphate. Functionally, catalyzes the conversion of glucosamine-6-phosphate to glucosamine-1-phosphate. The protein is Phosphoglucosamine mutase of Aliivibrio fischeri (strain ATCC 700601 / ES114) (Vibrio fischeri).